A 546-amino-acid chain; its full sequence is Protein FAM124A (546 aa).

3 disordered regions span residues 1–37, 286–360, and 488–546; these read MDPKAGGGGEEDDCVDSGAETGGSDYSHLSSTSSELS, FPKP…FQRS, and SSSS…EFYI. Over residues 24-36 the composition is skewed to low complexity; that stretch reads SDYSHLSSTSSEL. Over residues 286–302 the composition is skewed to basic residues; sequence FPKPGRVHHASEKKRHS. Composition is skewed to polar residues over residues 304–324 and 347–360; these read PLPSTAVPSHTPGSSQQSPLN and ANSTPNPPWSFQRS. Residues 488 to 511 are compositionally biased toward low complexity; the sequence is SSSSATARAAPPAPSTSTLTDSSP.

It belongs to the FAM124 family.

This is Protein FAM124A (FAM124A) from Homo sapiens (Human).